The sequence spans 413 residues: NPL4-like protein 2 (413 aa).

Serine 104 is modified (phosphoserine). The region spanning 131–272 is the MPN domain; sequence SVSFDRDAAN…ADVHFEAFQM (142 aa).

The protein belongs to the NPL4 family.

It participates in protein degradation; proteasomal ubiquitin-dependent pathway. In terms of biological role, may be part of a complex that binds ubiquitinated proteins and that is necessary for the export of misfolded proteins from the ER to the cytoplasm, where they are degraded by the proteasome. This is NPL4-like protein 2 from Arabidopsis thaliana (Mouse-ear cress).